Consider the following 84-residue polypeptide: Large ribosomal subunit protein bL27 (84 aa).

Residues 1–22 are disordered; that stretch reads MAHKKGASSTRNGRDSNAQRLG. The segment covering 7-19 has biased composition (polar residues); it reads ASSTRNGRDSNAQ.

It belongs to the bacterial ribosomal protein bL27 family.

In Streptomyces avermitilis (strain ATCC 31267 / DSM 46492 / JCM 5070 / NBRC 14893 / NCIMB 12804 / NRRL 8165 / MA-4680), this protein is Large ribosomal subunit protein bL27.